A 507-amino-acid polypeptide reads, in one-letter code: Cobyric acid synthase (507 aa).

The GATase cobBQ-type domain occupies 251-448; that stretch reads DIDIAVVHLP…LHGLFDSDAF (198 aa). Cys-332 functions as the Nucleophile in the catalytic mechanism. His-440 is an active-site residue.

Belongs to the CobB/CobQ family. CobQ subfamily.

It participates in cofactor biosynthesis; adenosylcobalamin biosynthesis. In terms of biological role, catalyzes amidations at positions B, D, E, and G on adenosylcobyrinic A,C-diamide. NH(2) groups are provided by glutamine, and one molecule of ATP is hydrogenolyzed for each amidation. The sequence is that of Cobyric acid synthase from Klebsiella pneumoniae subsp. pneumoniae (strain ATCC 700721 / MGH 78578).